Consider the following 273-residue polypeptide: Elongation factor Ts (273 aa).

Residues 79 to 82 are involved in Mg(2+) ion dislocation from EF-Tu; it reads TDFV.

The protein belongs to the EF-Ts family.

The protein resides in the cytoplasm. Associates with the EF-Tu.GDP complex and induces the exchange of GDP to GTP. It remains bound to the aminoacyl-tRNA.EF-Tu.GTP complex up to the GTP hydrolysis stage on the ribosome. This chain is Elongation factor Ts, found in Hydrogenobaculum sp. (strain Y04AAS1).